Consider the following 145-residue polypeptide: MSKIRQLLNKIPWYTDQVHSIFMYLIMGGFTTIINIVTFWLCTYILNWDYRIANTIAFIASVLFAYFSNKKFVFDSYTPTWKDRLREASSFFGFRCLTYIIDILVMILLISYLSVDELWAKIWTNIIVLVLNYVFSKWIIFKVQK.

The next 4 helical transmembrane spans lie at 21-41, 45-65, 91-111, and 122-142; these read IFMYLIMGGFTTIINIVTFWL, ILNWDYRIANTIAFIASVLFA, FFGFRCLTYIIDILVMILLIS, and IWTNIIVLVLNYVFSKWIIFK.

Belongs to the GtrA family.

Its subcellular location is the cell membrane. Its function is as follows. Involved in the decoration of cell wall teichoic acid with galactose and glucose. The protein is Cell wall teichoic acid glycosylation protein GtcA (gtcA) of Listeria monocytogenes.